The following is a 276-amino-acid chain: Large ribosomal subunit protein uL2c (276 aa).

The disordered stretch occupies residues 225 to 276 (AMNPVDHPHGGGEGRTPIGRKKPVTPWGYSALGKKSRKRNRYSDASILRRRE).

Belongs to the universal ribosomal protein uL2 family. Part of the 50S ribosomal subunit.

The protein localises to the plastid. It localises to the chloroplast. This chain is Large ribosomal subunit protein uL2c (rpl2), found in Pinus thunbergii (Japanese black pine).